Reading from the N-terminus, the 197-residue chain is Probable chorismate pyruvate-lyase (197 aa).

3 residues coordinate substrate: Arg66, Leu104, and Glu169.

Belongs to the UbiC family.

It localises to the cytoplasm. It catalyses the reaction chorismate = 4-hydroxybenzoate + pyruvate. It participates in cofactor biosynthesis; ubiquinone biosynthesis. In terms of biological role, removes the pyruvyl group from chorismate, with concomitant aromatization of the ring, to provide 4-hydroxybenzoate (4HB) for the ubiquinone pathway. The sequence is that of Probable chorismate pyruvate-lyase from Albidiferax ferrireducens (strain ATCC BAA-621 / DSM 15236 / T118) (Rhodoferax ferrireducens).